A 509-amino-acid chain; its full sequence is Phosphoglycerate kinase, glycosomal (509 aa).

The (2R)-3-phosphoglycerate site is built by Val-32, Asp-33, Phe-34, Asn-35, Arg-48, Ser-70, His-71, Gly-73, Arg-74, Arg-224, His-260, and Arg-261. Residue Gly-306 participates in ADP binding. Gly-306 is a CDP binding site. Lys-308 is a (2R)-3-phosphoglycerate binding site. Lys-308 is an AMP binding site. Asp-311 is a binding site for CDP. Residue Asp-311 participates in Mg(2+) binding. ADP contacts are provided by Lys-312 and Gly-330. Residue Lys-312 participates in AMP binding. Lys-312 serves as a coordination point for ATP. Gly-330 contacts CDP. AMP-binding residues include Ala-331 and Ala-403. Residues Ala-331 and Ala-403 each coordinate ATP. ADP-binding residues include Ala-403 and Asn-427. The CDP site is built by Gly-428 and Phe-433. ADP contacts are provided by Phe-433, Glu-434, Asp-466, and Ser-467. Residue Glu-434 coordinates AMP. Glu-434, Asp-466, and Ser-467 together coordinate ATP. A Mg(2+)-binding site is contributed by Asp-466.

The protein belongs to the phosphoglycerate kinase family. As to quaternary structure, monomer. Mg(2+) is required as a cofactor.

The protein localises to the glycosome. The enzyme catalyses (2R)-3-phosphoglycerate + ATP = (2R)-3-phospho-glyceroyl phosphate + ADP. It functions in the pathway carbohydrate degradation; glycolysis; pyruvate from D-glyceraldehyde 3-phosphate: step 2/5. The sequence is that of Phosphoglycerate kinase, glycosomal (56PGK) from Trypanosoma congolense.